Consider the following 411-residue polypeptide: ATP-dependent Clp protease ATP-binding subunit ClpX (411 aa).

Residues 1–49 (MSDKNIRCSFCGRTQKEVKKLIAGPGVYICDECVKLAYDIIEEEDSEEI) enclose the ClpX-type ZB domain. Zn(2+) is bound by residues Cys8, Cys11, Cys30, and Cys33. Residue 115 to 122 (PTGVGKTL) coordinates ATP.

Belongs to the ClpX chaperone family. As to quaternary structure, component of the ClpX-ClpP complex. Forms a hexameric ring that, in the presence of ATP, binds to fourteen ClpP subunits assembled into a disk-like structure with a central cavity, resembling the structure of eukaryotic proteasomes.

Functionally, ATP-dependent specificity component of the Clp protease. It directs the protease to specific substrates. Can perform chaperone functions in the absence of ClpP. The sequence is that of ATP-dependent Clp protease ATP-binding subunit ClpX from Dictyoglomus turgidum (strain DSM 6724 / Z-1310).